Consider the following 398-residue polypeptide: 1-deoxy-D-xylulose 5-phosphate reductoisomerase (398 aa).

Threonine 11, glycine 12, serine 13, isoleucine 14, and asparagine 125 together coordinate NADPH. Lysine 126 is a binding site for 1-deoxy-D-xylulose 5-phosphate. Glutamate 127 is an NADPH binding site. Aspartate 151 contacts Mn(2+). 1-deoxy-D-xylulose 5-phosphate-binding residues include serine 152, glutamate 153, serine 186, and histidine 209. Residue glutamate 153 participates in Mn(2+) binding. Glycine 215 is a binding site for NADPH. Serine 222, asparagine 227, lysine 228, and glutamate 231 together coordinate 1-deoxy-D-xylulose 5-phosphate. Residue glutamate 231 coordinates Mn(2+).

This sequence belongs to the DXR family. Mg(2+) is required as a cofactor. It depends on Mn(2+) as a cofactor.

It carries out the reaction 2-C-methyl-D-erythritol 4-phosphate + NADP(+) = 1-deoxy-D-xylulose 5-phosphate + NADPH + H(+). Its pathway is isoprenoid biosynthesis; isopentenyl diphosphate biosynthesis via DXP pathway; isopentenyl diphosphate from 1-deoxy-D-xylulose 5-phosphate: step 1/6. In terms of biological role, catalyzes the NADPH-dependent rearrangement and reduction of 1-deoxy-D-xylulose-5-phosphate (DXP) to 2-C-methyl-D-erythritol 4-phosphate (MEP). The sequence is that of 1-deoxy-D-xylulose 5-phosphate reductoisomerase from Acinetobacter baumannii (strain ACICU).